The chain runs to 226 residues: Ribonuclease 3 (226 aa).

The 123-residue stretch at 5–127 (TFQRGDPIGH…IVAAIYLDCG (123 aa)) folds into the RNase III domain. Residue Glu40 participates in Mg(2+) binding. Residue Asp44 is part of the active site. Residues Asp113 and Glu116 each coordinate Mg(2+). The active site involves Glu116. The DRBM domain maps to 154–224 (DPKTRLQEWL…ATLVIAQLDS (71 aa)).

It belongs to the ribonuclease III family. Homodimer. Mg(2+) serves as cofactor.

It localises to the cytoplasm. It catalyses the reaction Endonucleolytic cleavage to 5'-phosphomonoester.. In terms of biological role, digests double-stranded RNA. Involved in the processing of primary rRNA transcript to yield the immediate precursors to the large and small rRNAs (23S and 16S). Processes some mRNAs, and tRNAs when they are encoded in the rRNA operon. Processes pre-crRNA and tracrRNA of type II CRISPR loci if present in the organism. The sequence is that of Ribonuclease 3 from Xanthomonas axonopodis pv. citri (strain 306).